A 455-amino-acid chain; its full sequence is Post-transcriptional regulator MTA (455 aa).

The interval 17 to 163 (DSVSSSEFDE…QVNCQRQDDD (147 aa)) is disordered. Residues 23–42 (EFDESRDDETDAPTLEDEQL) are compositionally biased toward acidic residues. A compositionally biased stretch (low complexity) spans 88–98 (SPLSRPRSPSP). Short sequence motifs (nuclear localization signal) lie at residues 101–107 (RYGKKIK), 121–130 (KRPRRRPRDR), and 143–152 (RAAPKRATRR). C333, H423, C427, and C432 together coordinate Zn(2+). The CHC2-type zinc-finger motif lies at 333-432 (CVFDKQSELA…HHSLCRNSEC (100 aa)).

It belongs to the HHV-1 ICP27 protein family. In terms of assembly, homodimer. Homodimerization is required for transactivation. Interacts with host ALYREF. Associates in a complex with RNA, and host export factors NXF1/TAP and ALYREF; these interactions allow nuclear export of viral transcripts. Interacts with protein K-bZIP/K8; this interaction promotes viral gene expression during lytic infection. Interacts with host PABPC1. Interacts with host AGO2 and TNRC6A; these interactions inhibit host P-body formation. Interacts with PRKRA and EIF2AK2/PKR; these interactions inhibit host stress granule formation. Proteolytically cleaved by host caspase-7 (CASP7), leading to its inactivation, thereby preventing expression of viral lytic genes.

It is found in the host cytoplasm. It localises to the host nucleus. Functionally, post-transcriptional regulator that plays an essential role in the expression of viral lytic genes and productive viral replication. Possesses numerous activities that promote the expression of viral genes including enhancement of RNA stability, promotion of RNA splicing and stimulation of protein translation often via its ability to interact with different cellular cofactors. Stabilizes polyadenylated nuclear (PAN) RNA by cooperative binding to a 9-nt core of the MRE (MTA responsive element) together with host PABPC1. Functions as a viral splicing factor and promotes expression of intron-containing viral lytic genes. Protects viral transcripts from specific nuclear RNA decay pathways by preventing host MTREX recruitment that promotes unwinding and degradation of structured RNA substrates. Plays a role in the inhibition of host P-body formation by altering the scaffolding activity of TNRC6A at the initial stage thereby enhancing virus production. Also inhibits host stress granule formation by blocking autophosphorylation of EIF2AK2/PKR and its subsequent binding to dsRNA. In Human herpesvirus 8 type P (isolate GK18) (HHV-8), this protein is Post-transcriptional regulator MTA.